A 206-amino-acid chain; its full sequence is Large ribosomal subunit protein bL25 (206 aa).

A bL25 domain region spans residues 1–91 (MEYRLKAYYR…RPEHVDFFVL (91 aa)). Residues 92–206 (SDEPVEMYVP…IKKGKEEEEE (115 aa)) are CTC domain. The segment at 184 to 206 (AEEAAAEVAEPEVIKKGKEEEEE) is disordered. The span at 195–206 (EVIKKGKEEEEE) shows a compositional bias: basic and acidic residues.

It belongs to the bacterial ribosomal protein bL25 family. CTC subfamily. As to quaternary structure, part of the 50S ribosomal subunit. Contacts the 5S rRNA.

In terms of biological role, this is one of 3 proteins that mediate the attachment of the 5S rRNA onto the large ribosomal subunit. This is Large ribosomal subunit protein bL25 (rplY) from Thermus thermophilus.